A 55-amino-acid polypeptide reads, in one-letter code: Large ribosomal subunit protein bL33A (55 aa).

It belongs to the bacterial ribosomal protein bL33 family.

In Mycobacterium sp. (strain KMS), this protein is Large ribosomal subunit protein bL33A.